The sequence spans 171 residues: CDP-archaeol synthase (171 aa).

4 helical membrane-spanning segments follow: residues Val-11–Phe-31, Val-65–Ile-85, Leu-129–Ile-149, and Leu-151–Tyr-171.

The protein belongs to the CDP-archaeol synthase family. It depends on Mg(2+) as a cofactor.

The protein localises to the cell membrane. It catalyses the reaction 2,3-bis-O-(geranylgeranyl)-sn-glycerol 1-phosphate + CTP + H(+) = CDP-2,3-bis-O-(geranylgeranyl)-sn-glycerol + diphosphate. The protein operates within membrane lipid metabolism; glycerophospholipid metabolism. Functionally, catalyzes the formation of CDP-2,3-bis-(O-geranylgeranyl)-sn-glycerol (CDP-archaeol) from 2,3-bis-(O-geranylgeranyl)-sn-glycerol 1-phosphate (DGGGP) and CTP. This reaction is the third ether-bond-formation step in the biosynthesis of archaeal membrane lipids. The sequence is that of CDP-archaeol synthase from Methanothermobacter thermautotrophicus (strain ATCC 29096 / DSM 1053 / JCM 10044 / NBRC 100330 / Delta H) (Methanobacterium thermoautotrophicum).